We begin with the raw amino-acid sequence, 128 residues long: Saitohin (128 aa).

Residues 77-128 (SYSSEESSRNGAEQGRQLSIEGPFQGQNCPSHPAAALPLPMRGESQATSCQV) are disordered.

Interacts with PRDX6.

It is found in the cytoplasm. The protein localises to the nucleus. This Gorilla gorilla gorilla (Western lowland gorilla) protein is Saitohin (STH).